A 251-amino-acid chain; its full sequence is Cell division protein ZapD (251 aa).

Belongs to the ZapD family. As to quaternary structure, interacts with FtsZ.

It localises to the cytoplasm. Its function is as follows. Cell division factor that enhances FtsZ-ring assembly. Directly interacts with FtsZ and promotes bundling of FtsZ protofilaments, with a reduction in FtsZ GTPase activity. The protein is Cell division protein ZapD of Burkholderia cenocepacia (strain HI2424).